The primary structure comprises 277 residues: Ribosomal RNA small subunit methyltransferase I (277 aa).

The protein belongs to the methyltransferase superfamily. RsmI family.

It localises to the cytoplasm. The enzyme catalyses cytidine(1402) in 16S rRNA + S-adenosyl-L-methionine = 2'-O-methylcytidine(1402) in 16S rRNA + S-adenosyl-L-homocysteine + H(+). Catalyzes the 2'-O-methylation of the ribose of cytidine 1402 (C1402) in 16S rRNA. The sequence is that of Ribosomal RNA small subunit methyltransferase I from Mycoplasma genitalium (strain ATCC 33530 / DSM 19775 / NCTC 10195 / G37) (Mycoplasmoides genitalium).